The following is a 332-amino-acid chain: Biotin synthase (332 aa).

In terms of domain architecture, Radical SAM core spans 53–282; the sequence is HFGKKVKLNM…TKEIRISGGR (230 aa). [4Fe-4S] cluster contacts are provided by Cys71, Cys75, and Cys78. The [2Fe-2S] cluster site is built by Cys115, Cys147, Cys207, and Arg277.

Belongs to the radical SAM superfamily. Biotin synthase family. Homodimer. [4Fe-4S] cluster is required as a cofactor. The cofactor is [2Fe-2S] cluster.

The catalysed reaction is (4R,5S)-dethiobiotin + (sulfur carrier)-SH + 2 reduced [2Fe-2S]-[ferredoxin] + 2 S-adenosyl-L-methionine = (sulfur carrier)-H + biotin + 2 5'-deoxyadenosine + 2 L-methionine + 2 oxidized [2Fe-2S]-[ferredoxin]. It participates in cofactor biosynthesis; biotin biosynthesis; biotin from 7,8-diaminononanoate: step 2/2. Catalyzes the conversion of dethiobiotin (DTB) to biotin by the insertion of a sulfur atom into dethiobiotin via a radical-based mechanism. The protein is Biotin synthase of Bacillus cereus (strain AH187).